The chain runs to 288 residues: Alpha/beta hydrolase domain-containing protein 17B (288 aa).

Residues Ser-170, Asp-235, and His-264 each act as charge relay system in the active site.

This sequence belongs to the AB hydrolase superfamily. ABHD17 family. In terms of processing, palmitoylated on cysteine residues located in a cysteine cluster at the N-terminus which promotes membrane localization.

The protein localises to the cell membrane. It is found in the recycling endosome membrane. Its subcellular location is the cell projection. It localises to the dendritic spine. The protein resides in the postsynaptic density membrane. The enzyme catalyses S-hexadecanoyl-L-cysteinyl-[protein] + H2O = L-cysteinyl-[protein] + hexadecanoate + H(+). Functionally, hydrolyzes fatty acids from S-acylated cysteine residues in proteins. Has depalmitoylating activity towards nras. In Xenopus laevis (African clawed frog), this protein is Alpha/beta hydrolase domain-containing protein 17B.